A 36-amino-acid chain; its full sequence is Potassium channel toxin alpha-KTx 6.14 (36 aa).

Intrachain disulfides connect C5-C25, C11-C30, C15-C32, and C20-C35.

As to expression, expressed by the venom gland.

Its subcellular location is the secreted. Functionally, blocks Shaker B channels expressed in Sf9 cells, with a dissociation constant of 52 nM. The sequence is that of Potassium channel toxin alpha-KTx 6.14 from Hoffmannihadrurus gertschi (Scorpion).